Reading from the N-terminus, the 209-residue chain is Glutathione S-transferase 2 (209 aa).

Positions 1–81 (MLDFYYLPGS…YLCDQYGDED (81 aa)) constitute a GST N-terminal domain. Glutathione-binding positions include Ser-10, 51–53 (RTI), and 65–67 (ESR). The GST C-terminal domain occupies 88–209 (DTIQRAIVNQ…SGAKEFLTYK (122 aa)).

Belongs to the GST superfamily. Theta family. Homodimer.

The catalysed reaction is RX + glutathione = an S-substituted glutathione + a halide anion + H(+). In terms of biological role, conjugation of reduced glutathione to a wide number of exogenous and endogenous hydrophobic electrophiles. In Anopheles gambiae (African malaria mosquito), this protein is Glutathione S-transferase 2 (GstD2).